The primary structure comprises 428 residues: Light-independent protochlorophyllide reductase subunit N (428 aa).

Residues Cys30, Cys55, and Cys116 each contribute to the [4Fe-4S] cluster site.

Belongs to the BchN/ChlN family. Protochlorophyllide reductase is composed of three subunits; BchL, BchN and BchB. Forms a heterotetramer of two BchB and two BchN subunits. It depends on [4Fe-4S] cluster as a cofactor.

The enzyme catalyses chlorophyllide a + oxidized 2[4Fe-4S]-[ferredoxin] + 2 ADP + 2 phosphate = protochlorophyllide a + reduced 2[4Fe-4S]-[ferredoxin] + 2 ATP + 2 H2O. It functions in the pathway porphyrin-containing compound metabolism; bacteriochlorophyll biosynthesis (light-independent). In terms of biological role, component of the dark-operative protochlorophyllide reductase (DPOR) that uses Mg-ATP and reduced ferredoxin to reduce ring D of protochlorophyllide (Pchlide) to form chlorophyllide a (Chlide). This reaction is light-independent. The NB-protein (BchN-BchB) is the catalytic component of the complex. In Bradyrhizobium sp. (strain BTAi1 / ATCC BAA-1182), this protein is Light-independent protochlorophyllide reductase subunit N.